The primary structure comprises 82 residues: Small ribosomal subunit protein uS17 (82 aa).

It belongs to the universal ribosomal protein uS17 family. As to quaternary structure, part of the 30S ribosomal subunit.

Its function is as follows. One of the primary rRNA binding proteins, it binds specifically to the 5'-end of 16S ribosomal RNA. This chain is Small ribosomal subunit protein uS17, found in Aeromonas salmonicida (strain A449).